The sequence spans 130 residues: Protein ApaG (130 aa).

Residues 3–127 (KAETRGISVT…FSLDSPHVRR (125 aa)) enclose the ApaG domain.

This Methylobacterium radiotolerans (strain ATCC 27329 / DSM 1819 / JCM 2831 / NBRC 15690 / NCIMB 10815 / 0-1) protein is Protein ApaG.